Here is a 323-residue protein sequence, read N- to C-terminus: Putative divalent cation/proton antiporter TMEM165 (323 aa).

An N-terminal signal peptide occupies residues 1-33 (MAAAARGSGRAPTRRLLVLLLLQLLWAPAGVRA). Residues 34–89 (GPEEDLSHRNQEPPAPAQQLQPQPAAVQGLEPARAEKGLTPVAPVHTNKEDAAAQT) are Lumenal-facing. A compositionally biased stretch (basic and acidic residues) spans 35–44 (PEEDLSHRNQ). Residues 35–60 (PEEDLSHRNQEPPAPAQQLQPQPAAV) are disordered. Residues 50-59 (AQQLQPQPAA) show a composition bias toward low complexity. The chain crosses the membrane as a helical span at residues 90–110 (NLGFIHAFVAAISVIIVSELG). Residues 111–126 (DKTFFIAAIMAMRYNR) lie on the Cytoplasmic side of the membrane. The chain crosses the membrane as a helical span at residues 127-147 (LTVLAGAMLALALMTCLSVLF). The Lumenal portion of the chain corresponds to 148 to 151 (GYAT). The helical transmembrane segment at 152–172 (TVIPRVYTYYVSTALFAIFGI) threads the bilayer. The Cytoplasmic segment spans residues 173 to 227 (RMLREGLKMSPDEGQEELEEVQAELKKKDEEFQRTKLLNGPDVETGTSTAIPQKK). Residues 184–211 (DEGQEELEEVQAELKKKDEEFQRTKLLN) adopt a coiled-coil conformation. The chain crosses the membrane as a helical span at residues 228-248 (WLHFISPIFVQALTLTFLAEW). Residues 249–266 (GDRSQLTTIVLAAREDPY) lie on the Lumenal side of the membrane. A helical membrane pass occupies residues 267-287 (GVAVGGTVGHCLCTGLAVIGG). Over 288-298 (RMIAQKISVRT) the chain is Cytoplasmic. A helical transmembrane segment spans residues 299-319 (VTIIGGIVFLAFAFSALFISP). The Lumenal portion of the chain corresponds to 320–323 (ESGF).

It belongs to the GDT1 family. In terms of tissue distribution, expressed in mammary epithelial cells (at protein level).

It localises to the golgi apparatus membrane. The enzyme catalyses Ca(2+)(in) + n H(+)(out) = Ca(2+)(out) + n H(+)(in). It catalyses the reaction Mn(2+)(in) + n H(+)(out) = Mn(2+)(out) + n H(+)(in). Its function is as follows. Putative divalent cation:proton antiporter that exchanges calcium or manganese ions for protons across the Golgi membrane. Mediates the reversible transport of calcium or manganese to the Golgi lumen driven by the proton gradient and possibly the membrane potential generated by V-ATPase. Provides calcium or manganese cofactors to resident Golgi enzymes and contributes to the maintenance of an acidic luminal Golgi pH required for proper functioning of the secretory pathway. Promotes Ca(2+) storage within the Golgi lumen of the mammary epithelial cells to be then secreted into milk. The transport mechanism and stoichiometry remains to be elucidated. In Mus musculus (Mouse), this protein is Putative divalent cation/proton antiporter TMEM165.